The primary structure comprises 217 residues: Urease accessory protein UreG (217 aa).

Residue 13–20 (GPVGSGKT) coordinates GTP.

It belongs to the SIMIBI class G3E GTPase family. UreG subfamily. As to quaternary structure, homodimer. UreD, UreF and UreG form a complex that acts as a GTP-hydrolysis-dependent molecular chaperone, activating the urease apoprotein by helping to assemble the nickel containing metallocenter of UreC. The UreE protein probably delivers the nickel.

Its subcellular location is the cytoplasm. Functionally, facilitates the functional incorporation of the urease nickel metallocenter. This process requires GTP hydrolysis, probably effectuated by UreG. The sequence is that of Urease accessory protein UreG from Frankia alni (strain DSM 45986 / CECT 9034 / ACN14a).